The sequence spans 568 residues: Methionine--tRNA ligase (568 aa).

The short motif at 10-20 (PYVQSVPHLGN) is the 'HIGH' region element. Zn(2+) contacts are provided by cysteine 143, cysteine 146, cysteine 156, and cysteine 159. The 'KMSKS' region motif lies at 333-337 (KFSKS). ATP is bound at residue lysine 336.

This sequence belongs to the class-I aminoacyl-tRNA synthetase family. MetG type 1 subfamily. Zn(2+) is required as a cofactor.

The protein localises to the cytoplasm. The enzyme catalyses tRNA(Met) + L-methionine + ATP = L-methionyl-tRNA(Met) + AMP + diphosphate. Functionally, is required not only for elongation of protein synthesis but also for the initiation of all mRNA translation through initiator tRNA(fMet) aminoacylation. The sequence is that of Methionine--tRNA ligase from Metallosphaera sedula (strain ATCC 51363 / DSM 5348 / JCM 9185 / NBRC 15509 / TH2).